The following is an 827-amino-acid chain: Protein Jade-1 (827 aa).

A disordered region spans residues 1-35 (MKRVCLPSSSEDSDDNGSLSTSWSQHSRSLPSFRH). The segment covering 16–30 (NGSLSTSWSQHSRSL) has biased composition (polar residues). The PHD-type 1 zinc-finger motif lies at 200–250 (DVVCDVCQSPDGEDGNEMVFCDKCNICVHQACYGILKVPEGSWLCRTCALG). The segment at 252–286 (QPKCLLCPKKGGAMKPTRSGTKWVHVSCALWIPEV) adopts a C2HC pre-PHD-type zinc-finger fold. The PHD-type 2 zinc-finger motif lies at 310 to 366 (LLCSLCNEKVGACIQCSIKNCRTAFHVTCAFDHGLEMKTILTQEDEVKFKSYCPKHG). 2 disordered regions span residues 622–705 (TVAK…SSSL) and 769–810 (RTKE…SSSS). Composition is skewed to basic and acidic residues over residues 646–661 (SRTQ…EKPL) and 669–682 (KHTE…EKKR). The span at 692–705 (ATASSNKKQCSSSL) shows a compositional bias: polar residues.

It belongs to the JADE family. As to quaternary structure, component of the HBO1 complex composed.

It is found in the nucleus. The protein localises to the chromosome. It localises to the cytoplasm. The protein resides in the cytoskeleton. Its subcellular location is the cilium basal body. Scaffold subunit of some HBO1 complexes, which have a histone H4 acetyltransferase activity. Plays a key role in HBO1 complex by directing KAT7/HBO1 specificity towards histone H4 acetylation (H4K5ac, H4K8ac and H4K12ac), regulating DNA replication initiation, regulating DNA replication initiation. The protein is Protein Jade-1 (jade1) of Xenopus laevis (African clawed frog).